Here is a 335-residue protein sequence, read N- to C-terminus: Protein STRICTOSIDINE SYNTHASE-LIKE 12 (335 aa).

The signal sequence occupies residues 1 to 22 (MTSFCSMISLLLLLSLSSAVFS). N-linked (GlcNAc...) asparagine glycosylation is present at Asn-80.

It belongs to the strictosidine synthase family.

The protein resides in the vacuole. It catalyses the reaction 3alpha(S)-strictosidine + H2O = secologanin + tryptamine. Its pathway is alkaloid biosynthesis; 3alpha(S)-strictosidine biosynthesis; 3alpha(S)-strictosidine from secologanin and tryptamine: step 1/1. In terms of biological role, catalyzes the stereospecific condensation of tryptamine with secologanin to form strictosidine, the key intermediate of indole alkaloid biosynthesis. In Arabidopsis thaliana (Mouse-ear cress), this protein is Protein STRICTOSIDINE SYNTHASE-LIKE 12.